The primary structure comprises 517 residues: Argininosuccinate lyase, chloroplastic (517 aa).

A chloroplast-targeting transit peptide spans 1–45 (MGAIDLSFSQSLLFSSSRSNLSSSTHRSVSFLPPGSKSRCLPPLR). 2-(N(omega)-L-arginino)succinate-binding residues include serine 79, asparagine 166, and threonine 211. Catalysis depends on histidine 212, which acts as the Proton acceptor. Serine 333 functions as the Proton donor in the catalytic mechanism. Residues asparagine 341, tyrosine 373, glutamine 378, and lysine 381 each contribute to the 2-(N(omega)-L-arginino)succinate site.

Belongs to the lyase 1 family. Argininosuccinate lyase subfamily.

It localises to the plastid. The protein localises to the chloroplast. The enzyme catalyses 2-(N(omega)-L-arginino)succinate = fumarate + L-arginine. The protein operates within amino-acid biosynthesis; L-arginine biosynthesis; L-arginine from L-ornithine and carbamoyl phosphate: step 3/3. The chain is Argininosuccinate lyase, chloroplastic from Arabidopsis thaliana (Mouse-ear cress).